A 318-amino-acid polypeptide reads, in one-letter code: C1GALT1-specific chaperone 1 (318 aa).

The Cytoplasmic segment spans residues 1 to 6 (MLSESS). Residues 7-26 (SFLKGVMLGSIFCALITMLG) traverse the membrane as a helical; Signal-anchor for type II membrane protein segment. At 27–318 (HIRIGHGNRM…FLPPNGSDND (292 aa)) the chain is on the lumenal side.

Belongs to the glycosyltransferase 31 family. Beta3-Gal-T subfamily. Associates with core 1 beta-3-galactosyltransferase (C1GALT1), probably not with the soluble active form. In terms of tissue distribution, ubiquitously expressed. Abundantly expressed in salivary gland, stomach, small intestine, kidney, and testis and at intermediate levels in whole brain, cerebellum, spinal cord, thymus, spleen, trachea, lung, pancreas, ovary, and uterus.

Its subcellular location is the membrane. Probable chaperone required for the generation of 1 O-glycan Gal-beta1-3GalNAc-alpha1-Ser/Thr (T antigen), which is a precursor for many extended O-glycans in glycoproteins. Probably acts as a specific molecular chaperone assisting the folding/stability of core 1 beta-3-galactosyltransferase (C1GALT1). This chain is C1GALT1-specific chaperone 1 (C1GALT1C1), found in Homo sapiens (Human).